Reading from the N-terminus, the 287-residue chain is Hydroxysteroid 11-beta-dehydrogenase 1-like protein (287 aa).

An N-terminal signal peptide occupies residues 1-20 (MMKPFGKVLCAAGSLAVLLA). Residues 41 to 67 (GASA…TARR), 92 to 93 (DM), and 119 to 121 (NHI) contribute to the NADP(+) site. Residue S170 coordinates substrate. The active-site Proton acceptor is Y183. NADP(+) contacts are provided by residues 183–187 (YSATK) and 216–222 (GLIDTDA).

It belongs to the short-chain dehydrogenases/reductases (SDR) family.

It localises to the secreted. It catalyses the reaction cortisone + NADPH + H(+) = cortisol + NADP(+). In terms of biological role, unidirectional NADP(+)-dependent cortisol dehydrogenase (in vitro). This Gallus gallus (Chicken) protein is Hydroxysteroid 11-beta-dehydrogenase 1-like protein (HSD11B1L).